Here is a 470-residue protein sequence, read N- to C-terminus: Retinoic acid receptor RXR-gamma (470 aa).

Residues 1 to 145 (MHLATETAPS…NSPGALTKHI (145 aa)) are modulating. NR C4-type zinc fingers lie at residues 146 to 166 (CAIC…CEGC) and 182 to 206 (CRDS…YQKC). The segment at residues 146–211 (CAICGDRSSG…RYQKCLAMGM (66 aa)) is a DNA-binding region (nuclear receptor). The hinge stretch occupies residues 212–235 (KREAVQEERQRSREKSDTEAESTS). A compositionally biased stretch (basic and acidic residues) spans 217–229 (QEERQRSREKSDT). The segment at 217 to 242 (QEERQRSREKSDTEAESTSSTSEEMP) is disordered. In terms of domain architecture, NR LBD spans 238–466 (SEEMPVERIL…TFLMEMLETP (229 aa)).

Belongs to the nuclear hormone receptor family. NR2 subfamily. As to quaternary structure, homodimer. Heterodimer; with a rar molecule. Binds DNA preferentially as a rar/rxr heterodimer.

It localises to the nucleus. Its function is as follows. Receptor for retinoic acid. Retinoic acid receptors bind as heterodimers to their target response elements in response to their ligands, all-trans or 9-cis retinoic acid, and regulate gene expression in various biological processes. The rar/rxr heterodimers bind to the retinoic acid response elements (RARE) composed of tandem 5'-AGGTCA-3' sites known as DR1-DR5. The high affinity ligand for rxrs is 9-cis retinoic acid. This chain is Retinoic acid receptor RXR-gamma (rxrg), found in Xenopus laevis (African clawed frog).